Consider the following 404-residue polypeptide: Protrudin (404 aa).

Residues Met1–Glu20 form a disordered region. Residues Met1–Arg66 are Cytoplasmic-facing. Residues Met1–Trp92 are sufficient for homooligomerization. The interval Met1–Leu205 is sufficient for localization to endoplasmic reticulum tubular network and for interactions with REEP1, REEP5, ATL1, ATL2, ATL3 and SPAST. The interval Leu51–Leu64 is necessary for interaction with RAB11A and function in neurite outgrowth. A helical membrane pass occupies residues Trp67 to Leu87. Position 88 (Asn88) is a topological domain, lumenal. The chain crosses the membrane as a helical span at residues Glu89 to Leu109. Topologically, residues Gln110 to Gly187 are cytoplasmic. The segment at residues Ala188–Leu208 is an intramembrane region (helical). The Cytoplasmic portion of the chain corresponds to Asn209–Lys404. The segment at Met234–Glu286 is disordered. The tract at residues Thr271 to Lys354 is necessary for interaction with KIF5A. Over residues Glu276–Glu286 the composition is skewed to acidic residues. The interval Glu286–Glu292 is necessary for interaction with VAPA. Residues Thr337 to Ser403 form an FYVE-type zinc finger. Positions 343, 346, 359, 362, 367, 370, 395, and 398 each coordinate Zn(2+).

As to quaternary structure, can form homooligomers (monomers, dimers and tetramers). Interacts with RAB11A (GDP-bound form); regulates RAB11A. Interacts with FKBP8; may negatively regulate ZFYVE27 phosphorylation. Interacts with VAPA (via MSP domain); may regulate ZFYVE27 retention in the endoplasmic reticulum and its function in cell projections formation. Interacts with VAPB (via MSP domain). Interacts with RAB11B (GDP-bound form), REEP1, REEP5, ATL1, ATL2, ATL3, SPAST, SURF4, KIF5A, KIF5B, KIF5C and RTN3. Post-translationally, phosphorylated. Phosphorylation is induced by NGF through the MAPK/ERK pathway and modulates interaction with RAB11A.

It is found in the recycling endosome membrane. Its subcellular location is the endoplasmic reticulum membrane. It localises to the cell projection. The protein localises to the growth cone membrane. Key regulator of RAB11-dependent vesicular trafficking during neurite extension through polarized membrane transport. Promotes axonal elongation and contributes to the establishment of neuronal cell polarity. Involved in nerve growth factor-induced neurite formation in VAPA-dependent manner. Contributes to both the formation and stabilization of the tubular ER network. Involved in ER morphogenesis by regulating the sheet-to-tubule balance and possibly the density of tubule interconnections. Acts as an adapter protein that facilitates the interaction of KIF5A with VAPA, VAPB, SURF4, RAB11A, RAB11B and RTN3 and the ZFYVE27-KIF5A complex contributes to the transport of these proteins in neurons. Can induce formation of neurite-like membrane protrusions in non-neuronal cells in a KIF5A/B-dependent manner. In Bos taurus (Bovine), this protein is Protrudin (ZFYVE27).